The sequence spans 179 residues: ATP synthase subunit delta (179 aa).

Belongs to the ATPase delta chain family. In terms of assembly, F-type ATPases have 2 components, F(1) - the catalytic core - and F(0) - the membrane proton channel. F(1) has five subunits: alpha(3), beta(3), gamma(1), delta(1), epsilon(1). F(0) has three main subunits: a(1), b(2) and c(10-14). The alpha and beta chains form an alternating ring which encloses part of the gamma chain. F(1) is attached to F(0) by a central stalk formed by the gamma and epsilon chains, while a peripheral stalk is formed by the delta and b chains.

It is found in the cell membrane. F(1)F(0) ATP synthase produces ATP from ADP in the presence of a proton or sodium gradient. F-type ATPases consist of two structural domains, F(1) containing the extramembraneous catalytic core and F(0) containing the membrane proton channel, linked together by a central stalk and a peripheral stalk. During catalysis, ATP synthesis in the catalytic domain of F(1) is coupled via a rotary mechanism of the central stalk subunits to proton translocation. In terms of biological role, this protein is part of the stalk that links CF(0) to CF(1). It either transmits conformational changes from CF(0) to CF(1) or is implicated in proton conduction. This Clostridium botulinum (strain Okra / Type B1) protein is ATP synthase subunit delta.